Consider the following 118-residue polypeptide: Altered inheritance of mitochondria protein 26, mitochondrial (118 aa).

The next 3 membrane-spanning stretches (helical) occupy residues Glu7 to Phe27, Leu41 to Ala61, and Phe98 to Ile118.

Its subcellular location is the mitochondrion membrane. In terms of biological role, involved in selective mitochondria autophagy (mitophagy). In Saccharomyces cerevisiae (strain ATCC 204508 / S288c) (Baker's yeast), this protein is Altered inheritance of mitochondria protein 26, mitochondrial (AIM26).